Consider the following 590-residue polypeptide: MKTGRVLKISGPLVVAEGMEEANIYDVVKVGEKRLIGEIIEMREDRASIQVYEETAGLAPGDPVITTGEPLSVELGPGLIEAMFDGIQRPLNAIKAKAGDFITKGVEVHSLDRDKKWHFTPVKKVGDTVEAGDVIGIVQETSIVEHKIMVPYGIKGTIETIEEGDFTVVDTVAKVKDKDKVSDLMMMQKWPVRRGRPYGRKLNPAQPMITGQRVIDTFFPVTKGGTACVPGPFGSGKTVVQHQLAKWADAQIVVYIGCGERGNEMTDVLNEFPELKDPKTGEPLMKRTVLIANTSNMPVAAREASIYTGITIGEYFRDMGYSIALMADSTSRWAEALREMSGRLEEMPGDEGYPAYLGSRAAEFYERAGNVVSIGSEEREGALTVIGAVSPPGGDLSEPVTQATLRIVKVFWGLDAQLAYRRHFPAINWLNSYSLYIEKISPWMDENVASDWTALRIKAMSLLQEEASLEEIVRLVGIDALSEKDRLKLEVAKSLREDYLQQNAFHEVDTYASLGKQYKMLKLVLFFYDEAQRALNAGVYLKELLDLEVRDKIARAKYISEENIENIDAIFNELSEVIDQLISKGGIMNA.

Position 231–238 (231–238 (GPFGSGKT)) interacts with ATP.

It belongs to the ATPase alpha/beta chains family.

It carries out the reaction ATP + H2O + 4 H(+)(in) = ADP + phosphate + 5 H(+)(out). Functionally, produces ATP from ADP in the presence of a proton gradient across the membrane. The V-type alpha chain is a catalytic subunit. This chain is V-type ATP synthase alpha chain, found in Clostridium botulinum (strain ATCC 19397 / Type A).